A 299-amino-acid polypeptide reads, in one-letter code: MKLKEILSMETKELILKANRMTSNLKLDLCSIVNAKSGICDQDCKFCAQSSLYNTGVKKYPLLDKESILEKAKEAEKMGAIRFGIVTSGKRLTRKEILKVAKIIEFLKANTNLKICASLGVLEKDELRYLKENGLDRYHHNLETSPGFFRNICTTHTFYDRVKTVENAKNVELEVCSGGIFGVGENFDDRLELAKILKDLEVDSVPINFLIPIRGTPFENFQKLDVVERIRTIAMFRVVLGENVTIKIAAGREDFGDFQALAFFAGANGMIVGGYLTLKGRSYDDDIKLIEGLRELMRW.

The Radical SAM core domain occupies 22–252 (TSNLKLDLCS…NVTIKIAAGR (231 aa)). 3 residues coordinate [4Fe-4S] cluster: Cys40, Cys44, and Cys47. [2Fe-2S] cluster is bound by residues Cys116, Cys176, and Lys247.

This sequence belongs to the radical SAM superfamily. Biotin synthase family. In terms of assembly, homodimer. The cofactor is [4Fe-4S] cluster. [2Fe-2S] cluster is required as a cofactor.

It carries out the reaction (4R,5S)-dethiobiotin + (sulfur carrier)-SH + 2 reduced [2Fe-2S]-[ferredoxin] + 2 S-adenosyl-L-methionine = (sulfur carrier)-H + biotin + 2 5'-deoxyadenosine + 2 L-methionine + 2 oxidized [2Fe-2S]-[ferredoxin]. The protein operates within cofactor biosynthesis; biotin biosynthesis; biotin from 7,8-diaminononanoate: step 2/2. In terms of biological role, catalyzes the conversion of dethiobiotin (DTB) to biotin by the insertion of a sulfur atom into dethiobiotin via a radical-based mechanism. In Thermotoga petrophila (strain ATCC BAA-488 / DSM 13995 / JCM 10881 / RKU-1), this protein is Biotin synthase.